We begin with the raw amino-acid sequence, 206 residues long: Adenine phosphoribosyltransferase (206 aa).

It belongs to the purine/pyrimidine phosphoribosyltransferase family. As to quaternary structure, homodimer.

The protein localises to the cytoplasm. It catalyses the reaction AMP + diphosphate = 5-phospho-alpha-D-ribose 1-diphosphate + adenine. The protein operates within purine metabolism; AMP biosynthesis via salvage pathway; AMP from adenine: step 1/1. Catalyzes a salvage reaction resulting in the formation of AMP, that is energically less costly than de novo synthesis. The sequence is that of Adenine phosphoribosyltransferase from Burkholderia mallei (strain NCTC 10229).